Reading from the N-terminus, the 273-residue chain is ATP synthase subunit a (273 aa).

5 helical membrane-spanning segments follow: residues 44–64, 104–124, 149–169, 223–243, and 244–264; these read WHIDSLLFSVGLGVLFLWLFY, IAPLALTIFIWVFLMNFMDLI, DLNVTLGLSLSVFVLIVFYSI, LIFILIALMPWWAQFALSVPW, and AIFHILIIVLQAFIFMMLTIV.

The protein belongs to the ATPase A chain family. F-type ATPases have 2 components, CF(1) - the catalytic core - and CF(0) - the membrane proton channel. CF(1) has five subunits: alpha(3), beta(3), gamma(1), delta(1), epsilon(1). CF(0) has three main subunits: a(1), b(2) and c(9-12). The alpha and beta chains form an alternating ring which encloses part of the gamma chain. CF(1) is attached to CF(0) by a central stalk formed by the gamma and epsilon chains, while a peripheral stalk is formed by the delta and b chains.

The protein resides in the cell inner membrane. In terms of biological role, key component of the proton channel; it plays a direct role in the translocation of protons across the membrane. The polypeptide is ATP synthase subunit a (Shewanella putrefaciens (strain CN-32 / ATCC BAA-453)).